The chain runs to 598 residues: Nuclear receptor subfamily 4 group A member 1 (598 aa).

Disordered regions lie at residues Met1–Leu50 and Leu120–Gly159. Low complexity-rich tracts occupy residues Leu37–Leu50 and Ser134–Ser145. The required for nuclear import stretch occupies residues Arg171–Ser466. The segment at residues Glu264–Thr339 is a DNA-binding region (nuclear receptor). 2 consecutive NR C4-type zinc fingers follow at residues Cys267–Cys287 and Cys303–Cys327. Residues Ala268–Lys354 form a required for binding NBRE-containing DNA region. Residues Ala299–Pro361 form a required for the interaction with RXRA region. Position 341 is a phosphoserine; by PKA (Ser341). The disordered stretch occupies residues Ser341 to Pro361. Ser351 bears the Phosphoserine; by PKA, RPS6KA1 and RPS6KA3 mark. Positions Ser360–Thr595 constitute an NR LBD domain. Residues Pro521 to Gly544 form a binds lipopolysaccharide region. The interval Pro584–Thr595 is AF-2.

This sequence belongs to the nuclear hormone receptor family. NR4 subfamily. Binds the NGFI-B response element (NBRE) as a monomer. Binds the Nur response element (NurRE), consisting of two inverse NBRE-related octanucleotide repeats separated by 6 base-pairs, as a dimer. Interacts (via N-terminus) with NLRP3 (via LRR repeat domain); the interaction is direct, requires binding of NR4A1/Nur77 to NBRE-containing dsDNA and lipopolysaccharide, and leads to non-canonical NLRP3 inflammasome activation. Interacts with GADD45GIP1. Interacts with STK11. Heterodimer (via DNA-binding domain) with RXRA (via C-terminus); DNA-binding of the heterodimer is enhanced by 9-cis retinoic acid. Competes for the RXRA interaction with EP300 and thereby attenuates EP300 mediated acetylation of RXRA. Interacts with NCOA1. Interacts with NCOA2. Interacts with NCOA3. Zn(2+) is required as a cofactor. Post-translationally, phosphorylated at Ser-351 by RPS6KA1 and RPS6KA3 in response to mitogenic or stress stimuli. Acetylated by p300/CBP, acetylation increases stability. Deacetylated by HDAC1.

It localises to the cytoplasm. The protein resides in the cytosol. The protein localises to the nucleus. Its subcellular location is the mitochondrion. Orphan nuclear receptor. Binds the NGFI-B response element (NBRE) 5'-AAAGGTCA-3'. Binds 9-cis-retinoic acid outside of its ligand-binding (NR LBD) domain. Participates in energy homeostasis by sequestrating the kinase STK11 in the nucleus, thereby attenuating cytoplasmic AMPK activation. Regulates the inflammatory response in macrophages by regulating metabolic adaptations during inflammation, including repressing the transcription of genes involved in the citric acid cycle (TCA). Inhibits NF-kappa-B signaling by binding to low-affinity NF-kappa-B binding sites, such as at the IL2 promoter. May act concomitantly with NR4A2 in regulating the expression of delayed-early genes during liver regeneration. Plays a role in the vascular response to injury. In terms of biological role, in the cytosol, upon its detection of both bacterial lipopolysaccharide (LPS) and NBRE-containing mitochondrial DNA released by GSDMD pores during pyroptosis, it promotes non-canonical NLRP3 inflammasome activation by stimulating association of NLRP3 and NEK7. In Canis lupus familiaris (Dog), this protein is Nuclear receptor subfamily 4 group A member 1 (NR4A1).